Reading from the N-terminus, the 188-residue chain is Elongation factor P-like protein (188 aa).

The protein belongs to the elongation factor P family.

The polypeptide is Elongation factor P-like protein (Xanthomonas campestris pv. campestris (strain 8004)).